Here is a 67-residue protein sequence, read N- to C-terminus: Large ribosomal subunit protein bL35 (67 aa).

Belongs to the bacterial ribosomal protein bL35 family.

This chain is Large ribosomal subunit protein bL35, found in Leptospira interrogans serogroup Icterohaemorrhagiae serovar Lai (strain 56601).